The primary structure comprises 518 residues: Probable malate:quinone oxidoreductase (518 aa).

A disordered region spans residues 495-518 (GAIPATTDGQSTAGTEHTPTAATV). A compositionally biased stretch (polar residues) spans 501–518 (TDGQSTAGTEHTPTAATV).

Belongs to the MQO family. The cofactor is FAD.

It carries out the reaction (S)-malate + a quinone = a quinol + oxaloacetate. It participates in carbohydrate metabolism; tricarboxylic acid cycle; oxaloacetate from (S)-malate (quinone route): step 1/1. In Mycolicibacterium gilvum (strain PYR-GCK) (Mycobacterium gilvum (strain PYR-GCK)), this protein is Probable malate:quinone oxidoreductase.